Reading from the N-terminus, the 147-residue chain is Anti-sigma F factor (147 aa).

The protein belongs to the anti-sigma-factor family.

The catalysed reaction is L-seryl-[protein] + ATP = O-phospho-L-seryl-[protein] + ADP + H(+). It catalyses the reaction L-threonyl-[protein] + ATP = O-phospho-L-threonyl-[protein] + ADP + H(+). In terms of biological role, binds to sigma F and blocks its ability to form an RNA polymerase holoenzyme (E-sigma F). Phosphorylates SpoIIAA on a serine residue. This phosphorylation may enable SpoIIAA to act as an anti-anti-sigma factor that counteracts SpoIIAB and thus releases sigma F from inhibition. This is Anti-sigma F factor from Heyndrickxia coagulans (Weizmannia coagulans).